Here is a 256-residue protein sequence, read N- to C-terminus: PHD finger protein ALFIN-LIKE 4 (256 aa).

A disordered region spans residues 149–195 (QSKTANGSSKNKSGSKPPKRPNSDSKPQKQVQAKYEEENGGRGNGGD). The segment covering 154 to 164 (NGSSKNKSGSK) has biased composition (low complexity). Residues 200 to 252 (ETICGACGEAYANGEFWICCDICETWFHGKCVRITPAKAEHIKHYKCPGCSNK) form a PHD-type zinc finger.

It belongs to the Alfin family. Interacts with H3K4me3 and to a lesser extent with H3K4me2.

It is found in the nucleus. Histone-binding component that specifically recognizes H3 tails trimethylated on 'Lys-4' (H3K4me3), which mark transcription start sites of virtually all active genes. The sequence is that of PHD finger protein ALFIN-LIKE 4 from Oryza sativa subsp. indica (Rice).